A 231-amino-acid polypeptide reads, in one-letter code: Large ribosomal subunit protein uL1 (231 aa).

Belongs to the universal ribosomal protein uL1 family. In terms of assembly, part of the 50S ribosomal subunit.

In terms of biological role, binds directly to 23S rRNA. The L1 stalk is quite mobile in the ribosome, and is involved in E site tRNA release. Protein L1 is also a translational repressor protein, it controls the translation of the L11 operon by binding to its mRNA. This chain is Large ribosomal subunit protein uL1, found in Staphylococcus haemolyticus (strain JCSC1435).